The following is a 457-amino-acid chain: Exodeoxyribonuclease 7 large subunit (457 aa).

Belongs to the XseA family. In terms of assembly, heterooligomer composed of large and small subunits.

It is found in the cytoplasm. It catalyses the reaction Exonucleolytic cleavage in either 5'- to 3'- or 3'- to 5'-direction to yield nucleoside 5'-phosphates.. Bidirectionally degrades single-stranded DNA into large acid-insoluble oligonucleotides, which are then degraded further into small acid-soluble oligonucleotides. This Citrobacter koseri (strain ATCC BAA-895 / CDC 4225-83 / SGSC4696) protein is Exodeoxyribonuclease 7 large subunit.